We begin with the raw amino-acid sequence, 212 residues long: Octanoyltransferase (212 aa).

The region spanning 31-209 is the BPL/LPL catalytic domain; that stretch reads AETQDEIWLV…HFADLLGYNI (179 aa). Residues 70–77, 138–140, and 151–153 contribute to the substrate site; these read RGGQITYH, SLG, and GLA. Residue Cys-169 is the Acyl-thioester intermediate of the active site.

This sequence belongs to the LipB family.

It localises to the cytoplasm. It carries out the reaction octanoyl-[ACP] + L-lysyl-[protein] = N(6)-octanoyl-L-lysyl-[protein] + holo-[ACP] + H(+). Its pathway is protein modification; protein lipoylation via endogenous pathway; protein N(6)-(lipoyl)lysine from octanoyl-[acyl-carrier-protein]: step 1/2. In terms of biological role, catalyzes the transfer of endogenously produced octanoic acid from octanoyl-acyl-carrier-protein onto the lipoyl domains of lipoate-dependent enzymes. Lipoyl-ACP can also act as a substrate although octanoyl-ACP is likely to be the physiological substrate. The protein is Octanoyltransferase of Haemophilus influenzae (strain PittEE).